We begin with the raw amino-acid sequence, 277 residues long: (-)-trans-carveol dehydrogenase (277 aa).

10-32 is an NAD(+) binding site; that stretch reads LITGAARGQGRSHAIKLAEEGAD. Substrate is bound at residue Ser156. Tyr169 functions as the Proton acceptor in the catalytic mechanism.

Belongs to the short-chain dehydrogenases/reductases (SDR) family. Homotetramer.

It catalyses the reaction (1S,5R)-carveol + NAD(+) = (R)-carvone + NADH + H(+). The catalysed reaction is (1S,5S)-carveol + NAD(+) = (S)-carvone + NADH + H(+). It functions in the pathway terpene metabolism; limonene degradation. With respect to regulation, competitively inhibited by the product (S)- or (R)-carvone. Functionally, catalyzes the oxidation of carveol to carvone, with a strong stereoselectivity since it efficiently converts only the (6S)-stereoisomers, of which (-)-(4R,6S)-trans-carveol is the better substrate. Displays a broad substrate specificity with a preference for substituted cyclohexanols, and does not catalyze the oxidation of primary or short chain aliphatic secondary alcohols. Is also able, albeit more slowly, to oxidize limonene-1,2-diol into 1-hydroxy-2-oxolimonene. This chain is (-)-trans-carveol dehydrogenase (limC), found in Rhodococcus erythropolis (Arthrobacter picolinophilus).